The primary structure comprises 245 residues: Flavin-dependent thymidylate synthase (245 aa).

Residues 5–210 (IKVRLVNYTK…ELRPIIRWAK (206 aa)) form the ThyX domain. Residues serine 59, 83–85 (RHR), and glutamine 91 contribute to the FAD site. DUMP-binding positions include 80-83 (QLVR), 91-95 (QQSMR), and arginine 149. The ThyX motif signature appears at 83–93 (RHRIASYTQQS). Residues 165 to 167 (NLR) and histidine 171 contribute to the FAD site. A dUMP-binding site is contributed by arginine 176. Arginine 176 serves as the catalytic Involved in ionization of N3 of dUMP, leading to its activation.

This sequence belongs to the thymidylate synthase ThyX family. As to quaternary structure, homotetramer. It depends on FAD as a cofactor.

The enzyme catalyses dUMP + (6R)-5,10-methylene-5,6,7,8-tetrahydrofolate + NADPH + H(+) = dTMP + (6S)-5,6,7,8-tetrahydrofolate + NADP(+). The protein operates within pyrimidine metabolism; dTTP biosynthesis. Functionally, catalyzes the reductive methylation of 2'-deoxyuridine-5'-monophosphate (dUMP) to 2'-deoxythymidine-5'-monophosphate (dTMP) while utilizing 5,10-methylenetetrahydrofolate (mTHF) as the methyl donor, and NADPH and FADH(2) as the reductant. The chain is Flavin-dependent thymidylate synthase from Thermococcus onnurineus (strain NA1).